The chain runs to 716 residues: Probable basic-leucine zipper transcription factor O (716 aa).

Residues 20–142 are a coiled coil; that stretch reads LLDDFSQLQQ…YQQRQQQYQD (123 aa). Positions 173 to 233 are disordered; that stretch reads SINYNMNNNN…NNKTTDNINN (61 aa). Positions 381 to 444 constitute a bZIP domain; the sequence is KSTESIKKMN…SVDLMKPSND (64 aa). The basic motif stretch occupies residues 387-403; sequence KKMNQNKASRNYRQKKK. The segment at 406–413 is leucine-zipper; sequence IKEIEDKL.

It belongs to the bZIP family.

The protein resides in the nucleus. Functionally, probable transcriptional regulator. The polypeptide is Probable basic-leucine zipper transcription factor O (bzpO) (Dictyostelium discoideum (Social amoeba)).